The primary structure comprises 183 residues: Acireductone dioxygenase (183 aa).

Fe(2+) contacts are provided by histidine 99, histidine 101, glutamate 105, and histidine 144. 4 residues coordinate Ni(2+): histidine 99, histidine 101, glutamate 105, and histidine 144.

The protein belongs to the acireductone dioxygenase (ARD) family. Monomer. Fe(2+) serves as cofactor. Ni(2+) is required as a cofactor.

The catalysed reaction is 1,2-dihydroxy-5-(methylsulfanyl)pent-1-en-3-one + O2 = 3-(methylsulfanyl)propanoate + CO + formate + 2 H(+). It carries out the reaction 1,2-dihydroxy-5-(methylsulfanyl)pent-1-en-3-one + O2 = 4-methylsulfanyl-2-oxobutanoate + formate + 2 H(+). The protein operates within amino-acid biosynthesis; L-methionine biosynthesis via salvage pathway; L-methionine from S-methyl-5-thio-alpha-D-ribose 1-phosphate: step 5/6. Functionally, catalyzes 2 different reactions between oxygen and the acireductone 1,2-dihydroxy-3-keto-5-methylthiopentene (DHK-MTPene) depending upon the metal bound in the active site. Fe-containing acireductone dioxygenase (Fe-ARD) produces formate and 2-keto-4-methylthiobutyrate (KMTB), the alpha-ketoacid precursor of methionine in the methionine recycle pathway. Ni-containing acireductone dioxygenase (Ni-ARD) produces methylthiopropionate, carbon monoxide and formate, and does not lie on the methionine recycle pathway. The polypeptide is Acireductone dioxygenase (Microcystis aeruginosa).